A 299-amino-acid chain; its full sequence is Neomycin C epimerase (299 aa).

A Radical SAM core domain is found at 10-222 (PVRQVRAYRN…WNHIFETGRR (213 aa)). Residues Cys-26, Cys-30, Cys-33, Cys-226, and Cys-247 each contribute to the [4Fe-4S] cluster site. Cys-249 (proton donor) is an active-site residue. [4Fe-4S] cluster is bound by residues Cys-271 and Cys-274.

This sequence belongs to the radical SAM superfamily. [4Fe-4S] cluster serves as cofactor.

The catalysed reaction is neomycin C + AH2 + S-adenosyl-L-methionine = neomycin B + 5'-deoxyadenosine + L-methionine + A + H(+). The protein operates within antibiotic biosynthesis; neomycin biosynthesis. Catalyzes the last step of neomycin B biosynthesis, i.e. the irreversible epimerization at C-5''' of neomycin C to give neomycin B. To a lesser extent, is also able to convert neomycin Y2 to neomycin Y1. This chain is Neomycin C epimerase, found in Streptomyces fradiae (Streptomyces roseoflavus).